Reading from the N-terminus, the 290-residue chain is Elongation factor Ts (290 aa).

The interval 81–84 (TDFV) is involved in Mg(2+) ion dislocation from EF-Tu.

This sequence belongs to the EF-Ts family.

It localises to the cytoplasm. In terms of biological role, associates with the EF-Tu.GDP complex and induces the exchange of GDP to GTP. It remains bound to the aminoacyl-tRNA.EF-Tu.GTP complex up to the GTP hydrolysis stage on the ribosome. The chain is Elongation factor Ts from Vesicomyosocius okutanii subsp. Calyptogena okutanii (strain HA).